The following is a 660-amino-acid chain: Protein translocase subunit SecA 2 (660 aa).

Residues glutamine 113, glycine 131 to threonine 135, and aspartate 539 contribute to the ATP site.

Belongs to the SecA family. Monomer and homodimer. Part of the essential Sec protein translocation apparatus which comprises SecA, SecYEG and auxiliary proteins SecDF-YajC and YidC.

The protein resides in the cell inner membrane. It is found in the cytoplasm. It catalyses the reaction ATP + H2O + cellular proteinSide 1 = ADP + phosphate + cellular proteinSide 2.. Its function is as follows. Part of the Sec protein translocase complex. Interacts with the SecYEG preprotein conducting channel. Has a central role in coupling the hydrolysis of ATP to the transfer of proteins into and across the cell membrane, serving both as a receptor for the preprotein-SecB complex and as an ATP-driven molecular motor driving the stepwise translocation of polypeptide chains across the membrane. The protein is Protein translocase subunit SecA 2 of Bordetella avium (strain 197N).